A 326-amino-acid polypeptide reads, in one-letter code: Putative GTPase CC_2483 (326 aa).

Residues 61-69 (GVPGAGKST), Asp203, and 238-240 (SGL) each bind GTP.

This sequence belongs to the SIMIBI class G3E GTPase family. ArgK/MeaB subfamily.

In terms of biological role, may have GTPase activity. May also bind and hydrolyze ATP. May function as chaperone. This is Putative GTPase CC_2483 from Caulobacter vibrioides (strain ATCC 19089 / CIP 103742 / CB 15) (Caulobacter crescentus).